A 190-amino-acid polypeptide reads, in one-letter code: MFGVAKPPPSPIPKPPRGRHFGEKYPESVNFPSRGARQRASTRHRPSIKEVWEPPAPPGAGMIFWGENGENGDFGQSAPSCYERRRARSQGGQGAENAAPVLRPGPEGRRRRESLIFLEGDMVRETATVAPWTVSPLRPERPKSLLGRFRSRLTVWREVPRTPGPVAPIPELPGEADDPPTRTPPPPPDD.

Positions 1-15 (MFGVAKPPPSPIPKP) are enriched in pro residues. Disordered stretches follow at residues 1-110 (MFGV…EGRR) and 160-190 (PRTPGPVAPIPELPGEADDPPTRTPPPPPDD). Residues 36 to 46 (ARQRASTRHRP) show a composition bias toward basic residues. Pro residues-rich tracts occupy residues 162–171 (TPGPVAPIPE) and 181–190 (TRTPPPPPDD).

This chain is Protein E6C (13), found in Equus caballus (Horse).